An 80-amino-acid chain; its full sequence is Exodeoxyribonuclease 7 small subunit (80 aa).

This sequence belongs to the XseB family. In terms of assembly, heterooligomer composed of large and small subunits.

It is found in the cytoplasm. The catalysed reaction is Exonucleolytic cleavage in either 5'- to 3'- or 3'- to 5'-direction to yield nucleoside 5'-phosphates.. Its function is as follows. Bidirectionally degrades single-stranded DNA into large acid-insoluble oligonucleotides, which are then degraded further into small acid-soluble oligonucleotides. In Vibrio vulnificus (strain CMCP6), this protein is Exodeoxyribonuclease 7 small subunit.